The primary structure comprises 203 residues: Glycerol-3-phosphate acyltransferase (203 aa).

A run of 6 helical transmembrane segments spans residues 3–23, 51–71, 74–94, 116–136, 140–160, and 164–178; these read ILLATVAAYLIGSVSFAVVVS, KAAILTLVGDAFKGWLAVWLV, FGIGGEIGVALAAIAVFLGHL, AVHPVLGLATALTWLIVAFFF, SLAALVAAVFAPIFDVFLFGT, and PVAWAVLAMSVLLIW.

This sequence belongs to the PlsY family. In terms of assembly, probably interacts with PlsX.

The protein resides in the cell inner membrane. The enzyme catalyses an acyl phosphate + sn-glycerol 3-phosphate = a 1-acyl-sn-glycero-3-phosphate + phosphate. It functions in the pathway lipid metabolism; phospholipid metabolism. Its function is as follows. Catalyzes the transfer of an acyl group from acyl-phosphate (acyl-PO(4)) to glycerol-3-phosphate (G3P) to form lysophosphatidic acid (LPA). This enzyme utilizes acyl-phosphate as fatty acyl donor, but not acyl-CoA or acyl-ACP. In Burkholderia pseudomallei (strain 1710b), this protein is Glycerol-3-phosphate acyltransferase.